The following is a 430-amino-acid chain: Carbamoyl phosphate synthase small chain, chloroplastic (430 aa).

The N-terminal 35 residues, 1–35 (MAMATRTLGFVLPTSLSSQPSFDRRGGGFRVSVIR), are a transit peptide targeting the chloroplast. One can recognise a Glutamine amidotransferase type-1 domain in the interval 243–429 (KVIAYDFGIK…IELMKRSKQS (187 aa)). C318 functions as the Nucleophile in the catalytic mechanism. Residues H402 and E404 contribute to the active site.

This sequence belongs to the CarA family. In terms of assembly, heterodimer composed of 2 chains; the small (or glutamine) chain promotes the hydrolysis of glutamine to ammonia, which is used by the large (or ammonia) chain to synthesize carbamoyl phosphate.

Its subcellular location is the plastid. The protein localises to the chloroplast. It carries out the reaction hydrogencarbonate + L-glutamine + 2 ATP + H2O = carbamoyl phosphate + L-glutamate + 2 ADP + phosphate + 2 H(+). The catalysed reaction is L-glutamine + H2O = L-glutamate + NH4(+). Its pathway is amino-acid biosynthesis; L-arginine biosynthesis; carbamoyl phosphate from bicarbonate: step 1/1. It functions in the pathway pyrimidine metabolism; UMP biosynthesis via de novo pathway; (S)-dihydroorotate from bicarbonate: step 1/3. Small subunit of the arginine-specific carbamoyl phosphate synthase (CPSase). CPSase catalyzes the formation of carbamoyl phosphate from the ammonia moiety of glutamine, carbonate, and phosphate donated by ATP, the first step of the arginine biosynthetic pathway. The small subunit (glutamine amidotransferase) binds and cleaves glutamine to supply the large subunit with the substrate ammonia. This Arabidopsis thaliana (Mouse-ear cress) protein is Carbamoyl phosphate synthase small chain, chloroplastic (CARA).